The following is a 113-amino-acid chain: UPF0342 protein SEQ_0993 (113 aa).

Belongs to the UPF0342 family.

The polypeptide is UPF0342 protein SEQ_0993 (Streptococcus equi subsp. equi (strain 4047)).